The primary structure comprises 417 residues: Serine hydroxymethyltransferase 1 (417 aa).

(6S)-5,6,7,8-tetrahydrofolate-binding positions include Leu121 and 125–127; that span reads GHL. Lys230 carries the post-translational modification N6-(pyridoxal phosphate)lysine. 355–357 is a (6S)-5,6,7,8-tetrahydrofolate binding site; the sequence is SPF.

The protein belongs to the SHMT family. As to quaternary structure, homodimer. Pyridoxal 5'-phosphate is required as a cofactor.

The protein localises to the cytoplasm. It catalyses the reaction (6R)-5,10-methylene-5,6,7,8-tetrahydrofolate + glycine + H2O = (6S)-5,6,7,8-tetrahydrofolate + L-serine. The protein operates within one-carbon metabolism; tetrahydrofolate interconversion. Its pathway is amino-acid biosynthesis; glycine biosynthesis; glycine from L-serine: step 1/1. Catalyzes the reversible interconversion of serine and glycine with tetrahydrofolate (THF) serving as the one-carbon carrier. This reaction serves as the major source of one-carbon groups required for the biosynthesis of purines, thymidylate, methionine, and other important biomolecules. Also exhibits THF-independent aldolase activity toward beta-hydroxyamino acids, producing glycine and aldehydes, via a retro-aldol mechanism. The sequence is that of Serine hydroxymethyltransferase 1 from Pseudomonas aeruginosa (strain ATCC 15692 / DSM 22644 / CIP 104116 / JCM 14847 / LMG 12228 / 1C / PRS 101 / PAO1).